The following is a 377-amino-acid chain: DNA-directed RNA polymerase subunit alpha (377 aa).

The tract at residues 1 to 259 (MSDSSHNLLY…KHFSVFEKMD (259 aa)) is alpha N-terminal domain (alpha-NTD). The interval 276–377 (KDDILHKLVL…KIRSSKNTKG (102 aa)) is alpha C-terminal domain (alpha-CTD).

This sequence belongs to the RNA polymerase alpha chain family. As to quaternary structure, homodimer. The RNAP catalytic core consists of 2 alpha, 1 beta, 1 beta' and 1 omega subunit. When a sigma factor is associated with the core the holoenzyme is formed, which can initiate transcription.

The enzyme catalyses RNA(n) + a ribonucleoside 5'-triphosphate = RNA(n+1) + diphosphate. Its function is as follows. DNA-dependent RNA polymerase catalyzes the transcription of DNA into RNA using the four ribonucleoside triphosphates as substrates. The chain is DNA-directed RNA polymerase subunit alpha from Chlamydia trachomatis serovar D (strain ATCC VR-885 / DSM 19411 / UW-3/Cx).